The following is a 33-amino-acid chain: Beta/kappa-theraphotoxin-Hlv1a (33 aa).

3 disulfide bridges follow: cysteine 2–cysteine 17, cysteine 9–cysteine 22, and cysteine 16–cysteine 29. Isoleucine 33 carries the post-translational modification Isoleucine amide.

Belongs to the neurotoxin 10 (Hwtx-1) family. 11 (haplotoxin-2) subfamily. Expressed by the venom gland.

Its subcellular location is the secreted. Functionally, spider venom neurotoxin that blocks voltage-gated sodium channel Nav1.3/SCN3A in human (IC(50)=80 nM) and rat (IC(50)=160 nM). Partially inhibits human Kv11.1/KCNH2/ERG (25% at 175 uM). This is Beta/kappa-theraphotoxin-Hlv1a from Cyriopagopus lividus (Cobalt blue tarantula).